The following is a 262-amino-acid chain: LysM and putative peptidoglycan-binding domain-containing protein 3 (262 aa).

The Extracellular portion of the chain corresponds to 1 to 218 (MSGRIPNHGY…PYHGADWSLG (218 aa)). In terms of domain architecture, LysM spans 70-114 (ISRDICEGDTLNSIALQYCCTVADLKRANNFLNEQDFFALRTIKI). Residues 219-239 (WWTAVAIMVFVGIITPLFYFL) traverse the membrane as a helical segment. Topologically, residues 240 to 262 (YYEVLMKVNTSHTLNSIEKSGPS) are cytoplasmic.

Its subcellular location is the cell membrane. The protein localises to the golgi apparatus. Essential for Golgi structural integrity. This chain is LysM and putative peptidoglycan-binding domain-containing protein 3 (lysmd3), found in Xenopus tropicalis (Western clawed frog).